The chain runs to 533 residues: UDP-glucuronosyltransferase 1A1 (533 aa).

A signal peptide spans Met-1–Ser-25. Residues Asn-102, Asn-295, and Asn-347 are each glycosylated (N-linked (GlcNAc...) asparagine). Residues Val-491–Phe-507 form a helical membrane-spanning segment.

The protein belongs to the UDP-glycosyltransferase family. Homodimer. Homooligomer. Interacts with UGT1A3, UGT1A4, UGT1A6, UGT1A7, UGT1A8, UGT1A9 and UGT1A10 to form heterodimers. Isoform 1 interacts with isoform 2/i2 suggesting that oligomerization is involved in negative regulation of transferase activity by isoform 2. Isoform 1 also interacts with respective i2 isoforms of UGT1A3, UGT1A4, UGT1A6, UGT1A7, UGT1A8, UGT1A9 and UGT1A10. Expressed in liver, colon and small intestine. Not expressed in kidney, esophagus and skin. In terms of tissue distribution, expressed in liver, colon, small intestine and kidney. Not expressed in esophagus and skin.

Its subcellular location is the endoplasmic reticulum membrane. It localises to the cytoplasm. The protein localises to the perinuclear region. The enzyme catalyses glucuronate acceptor + UDP-alpha-D-glucuronate = acceptor beta-D-glucuronoside + UDP + H(+). The catalysed reaction is 17beta-estradiol + UDP-alpha-D-glucuronate = 17beta-estradiol 3-O-(beta-D-glucuronate) + UDP + H(+). It carries out the reaction 2-hydroxyestrone + UDP-alpha-D-glucuronate = 2-hydroxyestrone 3-O-(beta-D-glucuronate) + UDP + H(+). It catalyses the reaction 2-hydroxy-17beta-estradiol + UDP-alpha-D-glucuronate = 2-hydroxy-17beta-estradiol 3-O-(beta-D-glucuronate) + UDP + H(+). The enzyme catalyses 2-methoxy-17beta-estradiol + UDP-alpha-D-glucuronate = 2-methoxy-17beta-estradiol 3-O-(beta-D-glucuronate) + UDP + H(+). The catalysed reaction is 17alpha-estradiol + UDP-alpha-D-glucuronate = 17alpha-estradiol 3-O-(beta-D-glucuronate) + UDP + H(+). It carries out the reaction 16beta,17beta-estriol + UDP-alpha-D-glucuronate = 16beta,17beta-estriol 16-O-(beta-D-glucuronate) + UDP + H(+). It catalyses the reaction losartan + UDP-alpha-D-glucuronate = losartan-2-N-beta-D-glucuronide + UDP. The enzyme catalyses prunetin + UDP-alpha-D-glucuronate = prunetin-4'-O-beta-D-glucuronide + UDP. The catalysed reaction is SN-38 + UDP-alpha-D-glucuronate = SN-38 O-beta-D-glucuronide + UDP + H(+). It carries out the reaction (4Z,15Z)-bilirubin IXalpha + UDP-alpha-D-glucuronate = (4Z,15Z)-bilirubin IXalpha C12-beta-D-glucuronoside + UDP. It catalyses the reaction (4Z,15Z)-bilirubin IXalpha + UDP-alpha-D-glucuronate = (4Z,15Z)-bilirubin IXalpha C8-beta-D-glucuronoside + UDP. The enzyme catalyses (4Z,15Z)-bilirubin IXalpha C8-beta-D-glucuronoside + UDP-alpha-D-glucuronate = (4Z,15Z)-bilirubin IXalpha C8,C12-beta-D-bisglucuronoside + UDP. The catalysed reaction is (4Z,15Z)-bilirubin IXalpha C12-beta-D-glucuronoside + UDP-alpha-D-glucuronate = (4Z,15Z)-bilirubin IXalpha C8,C12-beta-D-bisglucuronoside + UDP. It carries out the reaction 8-iso-prostaglandin F2alpha + UDP-alpha-D-glucuronate = 8-iso-prostaglandin F2alpha-glucuronide + UDP + H(+). It catalyses the reaction (5Z,8Z,11Z,14Z)-eicosatetraenoate + UDP-alpha-D-glucuronate = O-[(5Z),(8Z),(11Z),(14Z)-eicosatetraenoyl]-beta-D-glucuronate + UDP. The enzyme catalyses 15-hydroxy-(5Z,8Z,11Z,13E)-eicosatetraenoate + UDP-alpha-D-glucuronate = 15-O-(beta-D-glucuronosyl)-(5Z,8Z,11Z,14Z)-eicosatetraenoate + UDP + H(+). The catalysed reaction is 20-hydroxy-(5Z,8Z,11Z,14Z)-eicosatetraenoate + UDP-alpha-D-glucuronate = 20-O-(beta-D-glucuronosyl)-(5Z,8Z,11Z,14Z)-eicosatetraenoate + UDP + H(+). It carries out the reaction prostaglandin B1 + UDP-alpha-D-glucuronate = 15-O-(beta-D-glucuronosyl)-prostaglandin B1 + UDP + H(+). It catalyses the reaction (E)-ferulate + UDP-alpha-D-glucuronate = (E)-4-O-(beta-D-glucuronosyl)-ferulate + UDP + H(+). The enzyme catalyses (E)-ferulate + UDP-alpha-D-glucuronate = (E)-ferulic acid beta-D-glucuronate ester + UDP. Its function is as follows. UDP-glucuronosyltransferase (UGT) that catalyzes phase II biotransformation reactions in which lipophilic substrates are conjugated with glucuronic acid to increase the metabolite's water solubility, thereby facilitating excretion into either the urine or bile. Essential for the elimination and detoxification of drugs, xenobiotics and endogenous compounds. Catalyzes the glucuronidation of endogenous estrogen hormones such as estradiol, estrone and estriol. Involved in the glucuronidation of bilirubin, a degradation product occurring in the normal catabolic pathway that breaks down heme in vertebrates. Involved in the glucuronidation of arachidonic acid (AA) and AA-derived eicosanoids including 15-HETE, 20-HETE, PGB1 and F2-isoprostane (8-iso-PGF2alpha). Involved in the glucuronidation of the phytochemical ferulic acid at the phenolic or the carboxylic acid group. Also catalyzes the glucuronidation the isoflavones genistein, daidzein, glycitein, formononetin, biochanin A and prunetin, which are phytoestrogens with anticancer and cardiovascular properties. Involved in the glucuronidation of the AGTR1 angiotensin receptor antagonist losartan, a drug which can inhibit the effect of angiotensin II. Involved in the biotransformation of 7-ethyl-10-hydroxycamptothecin (SN-38), the pharmacologically active metabolite of the anticancer drug irinotecan. In terms of biological role, lacks UGT glucuronidation activity but acts as a negative regulator of isoform 1. This chain is UDP-glucuronosyltransferase 1A1, found in Homo sapiens (Human).